Here is a 714-residue protein sequence, read N- to C-terminus: MPAAAGDGLLGEPAAPGGGGGAEDAARPAAACEGSFLPAWVSGVPRERLRDFQHHKRVGNYLIGSRKLGEGSFAKVREGLHVLTGEKVAIKVIDKKRAKKDTYVTKNLRREGQIQQMIRHPNITQLLDILETENSYYLVMELCPGGNLMHKIYEKKRLEESEARRYIRQLISAVEHLHRAGVVHRDLKIENLLLDEDNNIKLIDFGLSNCAGILGYSDPFSTQCGSPAYAAPELLARKKYGPKIDVWSIGVNMYAMLTGTLPFTVEPFSLRALYQKMVDKEMNPLPTQLSTGAISFLRSLLEPDPVKRPNIQQALANRWLNENYTGKVPCNVTYPNRISLEDLSPSVVLHMTEKLGYKNSDVINTVLSNRACHILAIYFLLNKKLERYLSGKSDIQDSLCYKTRLYQIEKYRAPKESYEASLDTWTRDLEFHAVQDKKPKEQEKRGDFLHRPFSKKLDKNLPSHKQPSGSLMTQIQNTKALLKDRKASKSSFPDKDSFGCRNIFRKTSDSNCVASSSMEFIPVPPPRTPRIVKKPEPHQPGPGSTGIPHKEDPLMLDMVRSFESVDRDDHIEVLSPSHHYRILNSPVSLARRNSSERTLSPGLPSGSMSPLHTPLHPTLVSFAHEDKNSPPKEEGLCSPPPVPSNGPMQPLGSPNCVKSRGRFPMMGIGQMLRKRHQSLQPSADRPLEASLPPLQPLAPVNLAFDMADGVKTQC.

Over residues 1 to 15 the composition is skewed to low complexity; that stretch reads MPAAAGDGLLGEPAA. The segment at 1–26 is disordered; that stretch reads MPAAAGDGLLGEPAAPGGGGGAEDAA. Positions 62–320 constitute a Protein kinase domain; sequence LIGSRKLGEG…IQQALANRWL (259 aa). Residues 68 to 76 and lysine 91 contribute to the ATP site; that span reads LGEGSFAKV. Aspartate 186 serves as the catalytic Proton acceptor. The segment covering 437–461 has biased composition (basic and acidic residues); that stretch reads KKPKEQEKRGDFLHRPFSKKLDKNL. Disordered regions lie at residues 437 to 471, 518 to 552, and 590 to 660; these read KKPK…SGSL, MEFI…HKED, and ARRN…VKSR. The segment covering 599–611 has biased composition (low complexity); the sequence is LSPGLPSGSMSPL. Basic and acidic residues predominate over residues 623 to 635; sequence AHEDKNSPPKEEG.

Belongs to the protein kinase superfamily. CAMK Ser/Thr protein kinase family. SNF1 subfamily.

The catalysed reaction is L-seryl-[protein] + ATP = O-phospho-L-seryl-[protein] + ADP + H(+). The enzyme catalyses L-threonyl-[protein] + ATP = O-phospho-L-threonyl-[protein] + ADP + H(+). The protein is Hormonally up-regulated neu tumor-associated kinase (HUNK) of Pan troglodytes (Chimpanzee).